The sequence spans 436 residues: uncharacterized protein (436 aa).

Positions 1 to 19 (MKKLLLASIIGLASTTSFA) are cleaved as a signal peptide.

This is an uncharacterized protein from Rickettsia bellii (strain RML369-C).